A 464-amino-acid chain; its full sequence is 3-isopropylmalate dehydratase large subunit (464 aa).

3 residues coordinate [4Fe-4S] cluster: C337, C397, and C400.

Belongs to the aconitase/IPM isomerase family. LeuC type 1 subfamily. As to quaternary structure, heterodimer of LeuC and LeuD. Requires [4Fe-4S] cluster as cofactor.

The catalysed reaction is (2R,3S)-3-isopropylmalate = (2S)-2-isopropylmalate. It participates in amino-acid biosynthesis; L-leucine biosynthesis; L-leucine from 3-methyl-2-oxobutanoate: step 2/4. Its function is as follows. Catalyzes the isomerization between 2-isopropylmalate and 3-isopropylmalate, via the formation of 2-isopropylmaleate. The chain is 3-isopropylmalate dehydratase large subunit from Bacillus cytotoxicus (strain DSM 22905 / CIP 110041 / 391-98 / NVH 391-98).